The chain runs to 37 residues: Large ribosomal subunit protein bL36 (37 aa).

It belongs to the bacterial ribosomal protein bL36 family.

The protein is Large ribosomal subunit protein bL36 of Halothermothrix orenii (strain H 168 / OCM 544 / DSM 9562).